The chain runs to 109 residues: Large ribosomal subunit protein uL24 (109 aa).

Belongs to the universal ribosomal protein uL24 family. As to quaternary structure, part of the 50S ribosomal subunit.

In terms of biological role, one of two assembly initiator proteins, it binds directly to the 5'-end of the 23S rRNA, where it nucleates assembly of the 50S subunit. One of the proteins that surrounds the polypeptide exit tunnel on the outside of the subunit. This chain is Large ribosomal subunit protein uL24, found in Rickettsia akari (strain Hartford).